Consider the following 564-residue polypeptide: Potassium-transporting ATPase potassium-binding subunit (564 aa).

The next 10 helical transmembrane spans lie at 4 to 24 (YDFA…PWLG), 67 to 87 (TLAL…VLLL), 135 to 155 (LGLT…LVVL), 179 to 199 (LYGL…QGVP), 258 to 278 (FEVA…GHYV), 286 to 306 (AILA…LWSE), 382 to 402 (AGLY…GLMI), 420 to 440 (LLVA…AIAA), 487 to 507 (LMIG…ILAL), and 533 to 553 (GLLL…TLAL).

The protein belongs to the KdpA family. As to quaternary structure, the system is composed of three essential subunits: KdpA, KdpB and KdpC.

Its subcellular location is the cell inner membrane. Part of the high-affinity ATP-driven potassium transport (or Kdp) system, which catalyzes the hydrolysis of ATP coupled with the electrogenic transport of potassium into the cytoplasm. This subunit binds the periplasmic potassium ions and delivers the ions to the membrane domain of KdpB through an intramembrane tunnel. This Pseudomonas putida (strain ATCC 47054 / DSM 6125 / CFBP 8728 / NCIMB 11950 / KT2440) protein is Potassium-transporting ATPase potassium-binding subunit.